A 36-amino-acid chain; its full sequence is Kappa-theraphotoxin-Pg1a (36 aa).

3 cysteine pairs are disulfide-bonded: Cys4–Cys19, Cys11–Cys24, and Cys18–Cys31.

It belongs to the neurotoxin 10 (Hwtx-1) family. 44 (Jztx-4) subfamily. As to expression, expressed by the venom gland.

The protein localises to the secreted. Gating modifier of Kv2.1/KCNB1 (IC(50)=5.1 nM), Kv2.2/KCNB2 and Kv4.3/KCND3 channels (IC(50)=39 nM). Acts by shifting the channel activation to more depolarized potentials by stabilizing the resting conformation of the voltage sensor. It completely inhibits opening of the Kv2.1/KCNB1 channel at negative membrane voltages and dramatically shifts channel activation to positive voltages. May act by partitioning into lipid membranes and then by binding the voltage sensor paddle of the channel from a place within the membrane. In Chilobrachys guangxiensis (Chinese earth tiger tarantula), this protein is Kappa-theraphotoxin-Pg1a.